Consider the following 448-residue polypeptide: Cysteine--tRNA ligase (448 aa).

Position 29 (Cys-29) interacts with Zn(2+). The short motif at 31–41 is the 'HIGH' region element; it reads PTVYNYIHIGN. The Zn(2+) site is built by Cys-212, His-237, and Glu-241. The 'KMSKS' region signature appears at 269–273; the sequence is KMSKS. Lys-272 is a binding site for ATP.

The protein belongs to the class-I aminoacyl-tRNA synthetase family. Monomer. Zn(2+) serves as cofactor.

The protein resides in the cytoplasm. The enzyme catalyses tRNA(Cys) + L-cysteine + ATP = L-cysteinyl-tRNA(Cys) + AMP + diphosphate. This Streptococcus equi subsp. zooepidemicus (strain MGCS10565) protein is Cysteine--tRNA ligase.